Here is a 171-residue protein sequence, read N- to C-terminus: Crossover junction endodeoxyribonuclease RuvC (171 aa).

Residues aspartate 7, glutamate 66, and aspartate 138 contribute to the active site. Mg(2+)-binding residues include aspartate 7, glutamate 66, and aspartate 138.

It belongs to the RuvC family. As to quaternary structure, homodimer which binds Holliday junction (HJ) DNA. The HJ becomes 2-fold symmetrical on binding to RuvC with unstacked arms; it has a different conformation from HJ DNA in complex with RuvA. In the full resolvosome a probable DNA-RuvA(4)-RuvB(12)-RuvC(2) complex forms which resolves the HJ. The cofactor is Mg(2+).

The protein resides in the cytoplasm. The enzyme catalyses Endonucleolytic cleavage at a junction such as a reciprocal single-stranded crossover between two homologous DNA duplexes (Holliday junction).. Its function is as follows. The RuvA-RuvB-RuvC complex processes Holliday junction (HJ) DNA during genetic recombination and DNA repair. Endonuclease that resolves HJ intermediates. Cleaves cruciform DNA by making single-stranded nicks across the HJ at symmetrical positions within the homologous arms, yielding a 5'-phosphate and a 3'-hydroxyl group; requires a central core of homology in the junction. The consensus cleavage sequence is 5'-(A/T)TT(C/G)-3'. Cleavage occurs on the 3'-side of the TT dinucleotide at the point of strand exchange. HJ branch migration catalyzed by RuvA-RuvB allows RuvC to scan DNA until it finds its consensus sequence, where it cleaves and resolves the cruciform DNA. The protein is Crossover junction endodeoxyribonuclease RuvC of Francisella tularensis subsp. holarctica (strain FTNF002-00 / FTA).